The chain runs to 126 residues: Flagellar protein FliT (126 aa).

Positions 1-50 (MASPHRLLKDYQQLLSLSQKILHLAVNGQWDTLVEQEIVYVQSVEGLVNT) are required for homodimerization. Residues 60–98 (MRLHLRQILQEVMDNEAKVKQLLQKRMDELSSLMGQSLK) are fliD binding.

The protein belongs to the FliT family. As to quaternary structure, homodimer. Interacts with FliD and FlhC.

The protein localises to the cytoplasm. It localises to the cytosol. Dual-function protein that regulates the transcription of class 2 flagellar operons and that also acts as an export chaperone for the filament-capping protein FliD. As a transcriptional regulator, acts as an anti-FlhDC factor; it directly binds FlhC, thus inhibiting the binding of the FlhC/FlhD complex to class 2 promoters, resulting in decreased expression of class 2 flagellar operons. As a chaperone, effects FliD transition to the membrane by preventing its premature polymerization, and by directing it to the export apparatus. The protein is Flagellar protein FliT of Pectobacterium carotovorum subsp. carotovorum (strain PC1).